The following is an 81-amino-acid chain: Small ribosomal subunit protein bS16 (81 aa).

This sequence belongs to the bacterial ribosomal protein bS16 family.

The protein is Small ribosomal subunit protein bS16 of Phytoplasma mali (strain AT).